The primary structure comprises 244 residues: Probable H/ACA ribonucleoprotein complex subunit 1-like protein (244 aa).

Disordered stretches follow at residues 1 to 53 and 145 to 244; these read MSFR…GGYD and FLPQ…TKFE. RGG-box regions lie at residues 4-51 and 153-222; these read RGGR…GRGG and RGRG…RGRG. The segment covering 160–173 has biased composition (basic and acidic residues); sequence RGGDRGGRGSDRGG. Composition is skewed to gly residues over residues 174-201 and 208-217; these read RGGF…GGFR and FRGGRGGDFG. The segment covering 218-228 has biased composition (basic and acidic residues); the sequence is GRGRGDFKRSY.

It belongs to the GAR1 family. As to quaternary structure, component of the small nucleolar ribonucleoprotein particle containing H/ACA-type snoRNAs (H/ACA snoRNPs).

It localises to the nucleus. Its subcellular location is the nucleolus. Its function is as follows. Required for ribosome biogenesis. Part of a complex which catalyzes pseudouridylation of rRNA. This involves the isomerization of uridine such that the ribose is subsequently attached to C5, instead of the normal N1. Pseudouridine ('psi') residues may serve to stabilize the conformation of rRNAs. Involved in phase separation into sub-nucleolar condensates. Essential for normal development and also plays a role in fertility. This Caenorhabditis elegans protein is Probable H/ACA ribonucleoprotein complex subunit 1-like protein.